A 144-amino-acid chain; its full sequence is 3-hydroxyacyl-[acyl-carrier-protein] dehydratase FabZ (144 aa).

His48 is a catalytic residue.

This sequence belongs to the thioester dehydratase family. FabZ subfamily.

The protein resides in the cytoplasm. It carries out the reaction a (3R)-hydroxyacyl-[ACP] = a (2E)-enoyl-[ACP] + H2O. Its function is as follows. Involved in unsaturated fatty acids biosynthesis. Catalyzes the dehydration of short chain beta-hydroxyacyl-ACPs and long chain saturated and unsaturated beta-hydroxyacyl-ACPs. The chain is 3-hydroxyacyl-[acyl-carrier-protein] dehydratase FabZ from Bacillus cereus (strain AH187).